The sequence spans 165 residues: Sorting nexin-12 (165 aa).

A disordered region spans residues 1 to 20 (MSDTAVADTRRLNSKPQDLT). Ser2 carries the N-acetylserine modification. A Phosphotyrosine modification is found at Tyr23. Positions 28 to 151 (NFLEIDIFNP…HMFLQEEAID (124 aa)) constitute a PX domain. 4 residues coordinate a 1,2-diacyl-sn-glycero-3-phospho-(1D-myo-inositol-3-phosphate): Arg71, Ser73, Lys96, and Arg118. Ser73 bears the Phosphoserine mark.

The protein belongs to the sorting nexin family.

It is found in the membrane. May be involved in several stages of intracellular trafficking. This is Sorting nexin-12 (Snx12) from Mus musculus (Mouse).